The chain runs to 394 residues: Phosphopentomutase (394 aa).

Positions 14, 287, 292, 328, 329, and 340 each coordinate Mn(2+).

It belongs to the phosphopentomutase family. It depends on Mn(2+) as a cofactor.

Its subcellular location is the cytoplasm. It catalyses the reaction 2-deoxy-alpha-D-ribose 1-phosphate = 2-deoxy-D-ribose 5-phosphate. The catalysed reaction is alpha-D-ribose 1-phosphate = D-ribose 5-phosphate. It functions in the pathway carbohydrate degradation; 2-deoxy-D-ribose 1-phosphate degradation; D-glyceraldehyde 3-phosphate and acetaldehyde from 2-deoxy-alpha-D-ribose 1-phosphate: step 1/2. In terms of biological role, isomerase that catalyzes the conversion of deoxy-ribose 1-phosphate (dRib-1-P) and ribose 1-phosphate (Rib-1-P) to deoxy-ribose 5-phosphate (dRib-5-P) and ribose 5-phosphate (Rib-5-P), respectively. The polypeptide is Phosphopentomutase (Listeria monocytogenes serotype 4b (strain CLIP80459)).